A 399-amino-acid chain; its full sequence is Multi-drug resistance efflux pump PmrA (399 aa).

10 helical membrane passes run 12 to 34 (IAWF…MPIF), 49 to 71 (AGLA…GILA), 84 to 106 (GLAM…LIFL), 140 to 162 (LSTG…AELF), 167 to 186 (VFLL…ICFI), 217 to 239 (LFLT…ALYV), 248 to 270 (LLFV…AGVM), 306 to 328 (LGLY…NALL), 340 to 362 (VFAF…GSAV), and 366 to 388 (FGYH…FNLI).

It belongs to the major facilitator superfamily. TCR/Tet family.

The protein localises to the cell membrane. Functionally, efflux pump for various substrates. This chain is Multi-drug resistance efflux pump PmrA (pmrA), found in Streptococcus pneumoniae serotype 4 (strain ATCC BAA-334 / TIGR4).